Consider the following 274-residue polypeptide: Diaminopimelate epimerase (274 aa).

Residues N11 and N65 each coordinate substrate. Residue C74 is the Proton donor of the active site. Residues 75–76 (GN), N158, N191, and 209–210 (ER) contribute to the substrate site. The Proton acceptor role is filled by C218. 219–220 (GT) provides a ligand contact to substrate.

This sequence belongs to the diaminopimelate epimerase family. Homodimer.

It is found in the cytoplasm. It carries out the reaction (2S,6S)-2,6-diaminopimelate = meso-2,6-diaminopimelate. The protein operates within amino-acid biosynthesis; L-lysine biosynthesis via DAP pathway; DL-2,6-diaminopimelate from LL-2,6-diaminopimelate: step 1/1. Catalyzes the stereoinversion of LL-2,6-diaminopimelate (L,L-DAP) to meso-diaminopimelate (meso-DAP), a precursor of L-lysine and an essential component of the bacterial peptidoglycan. This Carboxydothermus hydrogenoformans (strain ATCC BAA-161 / DSM 6008 / Z-2901) protein is Diaminopimelate epimerase.